The primary structure comprises 367 residues: Glutamate 5-kinase (367 aa).

Lysine 8 is an ATP binding site. Serine 49, aspartate 136, and asparagine 148 together coordinate substrate. ATP contacts are provided by residues 168–169 (TD) and 210–216 (TGGMATK). Positions 275–353 (TGKLLLDAGA…DQIVQILGYE (79 aa)) constitute a PUA domain.

The protein belongs to the glutamate 5-kinase family.

The protein localises to the cytoplasm. The catalysed reaction is L-glutamate + ATP = L-glutamyl 5-phosphate + ADP. It functions in the pathway amino-acid biosynthesis; L-proline biosynthesis; L-glutamate 5-semialdehyde from L-glutamate: step 1/2. Functionally, catalyzes the transfer of a phosphate group to glutamate to form L-glutamate 5-phosphate. This Synechococcus elongatus (strain ATCC 33912 / PCC 7942 / FACHB-805) (Anacystis nidulans R2) protein is Glutamate 5-kinase.